The primary structure comprises 556 residues: Formate--tetrahydrofolate ligase (556 aa).

Residue 64–71 coordinates ATP; sequence TPAGEGKT.

Belongs to the formate--tetrahydrofolate ligase family.

It carries out the reaction (6S)-5,6,7,8-tetrahydrofolate + formate + ATP = (6R)-10-formyltetrahydrofolate + ADP + phosphate. The protein operates within one-carbon metabolism; tetrahydrofolate interconversion. This chain is Formate--tetrahydrofolate ligase, found in Haemophilus ducreyi (strain 35000HP / ATCC 700724).